A 547-amino-acid polypeptide reads, in one-letter code: Glucose-6-phosphate isomerase (547 aa).

Residue Glu355 is the Proton donor of the active site. Catalysis depends on residues His386 and Lys512.

It belongs to the GPI family.

It localises to the cytoplasm. It carries out the reaction alpha-D-glucose 6-phosphate = beta-D-fructose 6-phosphate. Its pathway is carbohydrate biosynthesis; gluconeogenesis. The protein operates within carbohydrate degradation; glycolysis; D-glyceraldehyde 3-phosphate and glycerone phosphate from D-glucose: step 2/4. Its function is as follows. Catalyzes the reversible isomerization of glucose-6-phosphate to fructose-6-phosphate. In Corynebacterium diphtheriae (strain ATCC 700971 / NCTC 13129 / Biotype gravis), this protein is Glucose-6-phosphate isomerase.